The primary structure comprises 155 residues: Endoribonuclease YbeY (155 aa).

His-114, His-118, and His-124 together coordinate Zn(2+).

It belongs to the endoribonuclease YbeY family. The cofactor is Zn(2+).

Its subcellular location is the cytoplasm. Single strand-specific metallo-endoribonuclease involved in late-stage 70S ribosome quality control and in maturation of the 3' terminus of the 16S rRNA. This Enterobacter sp. (strain 638) protein is Endoribonuclease YbeY.